Consider the following 142-residue polypeptide: Large ribosomal subunit protein uL11 (142 aa).

This sequence belongs to the universal ribosomal protein uL11 family. In terms of assembly, part of the ribosomal stalk of the 50S ribosomal subunit. Interacts with L10 and the large rRNA to form the base of the stalk. L10 forms an elongated spine to which L12 dimers bind in a sequential fashion forming a multimeric L10(L12)X complex. One or more lysine residues are methylated.

Forms part of the ribosomal stalk which helps the ribosome interact with GTP-bound translation factors. This is Large ribosomal subunit protein uL11 from Liberibacter asiaticus (Citrus greening disease).